A 235-amino-acid polypeptide reads, in one-letter code: Aspartate/glutamate leucyltransferase (235 aa).

The protein belongs to the R-transferase family. Bpt subfamily.

It localises to the cytoplasm. The catalysed reaction is N-terminal L-glutamyl-[protein] + L-leucyl-tRNA(Leu) = N-terminal L-leucyl-L-glutamyl-[protein] + tRNA(Leu) + H(+). It catalyses the reaction N-terminal L-aspartyl-[protein] + L-leucyl-tRNA(Leu) = N-terminal L-leucyl-L-aspartyl-[protein] + tRNA(Leu) + H(+). Functionally, functions in the N-end rule pathway of protein degradation where it conjugates Leu from its aminoacyl-tRNA to the N-termini of proteins containing an N-terminal aspartate or glutamate. The protein is Aspartate/glutamate leucyltransferase of Pseudomonas fluorescens (strain ATCC BAA-477 / NRRL B-23932 / Pf-5).